The sequence spans 156 residues: ATP synthase subunit b (156 aa).

Residues 12 to 32 (VAFFIFVLFCMKYVWPPVIAA) form a helical membrane-spanning segment.

It belongs to the ATPase B chain family. In terms of assembly, F-type ATPases have 2 components, F(1) - the catalytic core - and F(0) - the membrane proton channel. F(1) has five subunits: alpha(3), beta(3), gamma(1), delta(1), epsilon(1). F(0) has three main subunits: a(1), b(2) and c(10-14). The alpha and beta chains form an alternating ring which encloses part of the gamma chain. F(1) is attached to F(0) by a central stalk formed by the gamma and epsilon chains, while a peripheral stalk is formed by the delta and b chains.

It localises to the cell inner membrane. In terms of biological role, f(1)F(0) ATP synthase produces ATP from ADP in the presence of a proton or sodium gradient. F-type ATPases consist of two structural domains, F(1) containing the extramembraneous catalytic core and F(0) containing the membrane proton channel, linked together by a central stalk and a peripheral stalk. During catalysis, ATP synthesis in the catalytic domain of F(1) is coupled via a rotary mechanism of the central stalk subunits to proton translocation. Component of the F(0) channel, it forms part of the peripheral stalk, linking F(1) to F(0). The protein is ATP synthase subunit b of Pseudomonas syringae pv. tomato (strain ATCC BAA-871 / DC3000).